Here is a 127-residue protein sequence, read N- to C-terminus: Lysozyme C (127 aa).

One can recognise a C-type lysozyme domain in the interval 1-127 (KDIPRCELVK…KDLSSYVRGC (127 aa)). 4 cysteine pairs are disulfide-bonded: C6–C127, C30–C115, C64–C80, and C76–C94. Catalysis depends on residues E35 and D52. Ca(2+) contacts are provided by K82, D85, N87, D90, and D91.

Belongs to the glycosyl hydrolase 22 family. As to quaternary structure, monomer. Ca(2+) serves as cofactor.

It is found in the secreted. The catalysed reaction is Hydrolysis of (1-&gt;4)-beta-linkages between N-acetylmuramic acid and N-acetyl-D-glucosamine residues in a peptidoglycan and between N-acetyl-D-glucosamine residues in chitodextrins.. Its function is as follows. Lysozymes have primarily a bacteriolytic function; those in tissues and body fluids are associated with the monocyte-macrophage system and enhance the activity of immunoagents. In Columba livia (Rock dove), this protein is Lysozyme C (LYZ).